A 318-amino-acid polypeptide reads, in one-letter code: Cobalamin biosynthesis protein CobD (318 aa).

The next 5 membrane-spanning stretches (helical) occupy residues 56-76 (VLWLLVVGITWLVSWGFLWLM), 78-98 (EINPWLGWLAQVWMIYTLLAG), 153-173 (VDGVIAPLFFLMLGGAPLAMA), 204-224 (LANWLPARLSWVLLSAAAWLI), and 298-318 (MMASLLALLLFALTHLLLVGI).

The protein belongs to the CobD/CbiB family.

Its subcellular location is the cell membrane. The protein operates within cofactor biosynthesis; adenosylcobalamin biosynthesis. In terms of biological role, converts cobyric acid to cobinamide by the addition of aminopropanol on the F carboxylic group. The polypeptide is Cobalamin biosynthesis protein CobD (Yersinia enterocolitica serotype O:8 / biotype 1B (strain NCTC 13174 / 8081)).